The primary structure comprises 1196 residues: Phosphatidylinositol-3,5-bisphosphate 3-phosphatase MTMR3 (1196 aa).

A Phosphoserine modification is found at S8. In terms of domain architecture, Myotubularin phosphatase spans 155–576; sequence EHVTSRFKNE…RNLMLWSAVY (422 aa). Positions 326, 351, and 352 each coordinate a 1,2-diacyl-sn-glycero-3-phospho-(1D-myo-inositol-3,5-bisphosphate). Residues N326, N351, and I352 each contribute to the a 1,2-diacyl-sn-glycero-3-phospho-(1D-myo-inositol-3-phosphate) site. The Phosphocysteine intermediate role is filled by C413. Positions 414, 415, 416, 417, 418, 419, 455, and 459 each coordinate a 1,2-diacyl-sn-glycero-3-phospho-(1D-myo-inositol-3,5-bisphosphate). S414, D415, G416, W417, D418, and R419 together coordinate a 1,2-diacyl-sn-glycero-3-phospho-(1D-myo-inositol-3-phosphate). R459 is a binding site for a 1,2-diacyl-sn-glycero-3-phospho-(1D-myo-inositol-3-phosphate). Positions 587–612 are disordered; that stretch reads DDSCAPYPVPGTSPDEPPLSRLPKTR. The span at 593–603 shows a compositional bias: pro residues; the sequence is YPVPGTSPDEP. 4 positions are modified to phosphoserine: S613, S633, S647, and S651. Disordered regions lie at residues 697 to 719 and 855 to 900; these read TKEE…EVKE and ESGP…HRTS. The residue at position 907 (S907) is a Phosphoserine. The span at 993–1008 shows a compositional bias: polar residues; sequence NSHSGRPSTTSSPDQP. A disordered region spans residues 993 to 1019; the sequence is NSHSGRPSTTSSPDQPSRSHLDDDGMP. Residues 1027 to 1060 are a coiled coil; the sequence is QRLRQIESGHQQEVETLKKQVQELKSRLESQYLT. The residue at position 1062 (S1062) is a Phosphoserine. An FYVE-type zinc finger spans residues 1117–1177; the sequence is DHLAAHCYAC…VCKSCYSSLH (61 aa). The Zn(2+) site is built by C1123, C1126, C1139, C1142, C1147, C1150, C1169, and C1172.

The protein belongs to the protein-tyrosine phosphatase family. Non-receptor class myotubularin subfamily. In terms of assembly, forms heterodimers with MTMR4 that recruit both CEP55 and PLK1; occurs during early mitosis, regulates the phosphorylation of CEP55 by PLK1 and its recruitment to the midbody where it mediates cell abscission.

It is found in the cytoplasm. It localises to the cytosol. The protein localises to the membrane. The catalysed reaction is a 1,2-diacyl-sn-glycero-3-phospho-(1D-myo-inositol-3,5-bisphosphate) + H2O = a 1,2-diacyl-sn-glycero-3-phospho-(1D-myo-inositol-5-phosphate) + phosphate. The enzyme catalyses a 1,2-diacyl-sn-glycero-3-phospho-(1D-myo-inositol-3-phosphate) + H2O = a 1,2-diacyl-sn-glycero-3-phospho-(1D-myo-inositol) + phosphate. It carries out the reaction 1,2-dihexadecanoyl-sn-glycero-3-phospho-(1D-myo-inositol-3-phosphate) + H2O = 1,2-dihexadecanoyl-sn-glycero-3-phospho-(1D-myo-inositol) + phosphate. It catalyses the reaction 1,2-dioctanoyl-sn-glycero-3-phospho-(1-D-myo-inositol-3-phosphate) + H2O = 1,2-dioctanoyl-sn-glycero-3-phospho-(1D-myo-inositol) + phosphate. The catalysed reaction is 1,2-dihexadecanoyl-sn-glycero-3-phospho-(1D-myo-inositol-3,5-phosphate) + H2O = 1,2-dihexadecanoyl-sn-glycero-3-phospho-(1D-myo-inositol-5-phosphate) + phosphate. Functionally, lipid phosphatase that specifically dephosphorylates the D-3 position of phosphatidylinositol 3-phosphate and phosphatidylinositol 3,5-bisphosphate, generating phosphatidylinositol and phosphatidylinositol 5-phosphate. Decreases the levels of phosphatidylinositol 3-phosphate, a phospholipid found in cell membranes where it acts as key regulator of both cell signaling and intracellular membrane traffic. Could also have a molecular sequestering/adapter activity and regulate biological processes independently of its phosphatase activity. It includes the regulation of midbody abscission during mitotic cytokinesis. This is Phosphatidylinositol-3,5-bisphosphate 3-phosphatase MTMR3 from Mus musculus (Mouse).